Reading from the N-terminus, the 494-residue chain is MSTTLLSAFYDVDFLCKTEKSLANLNLNNMLDKKAVGTPVAAAPSSGFAPGFLRRHSASNLHALAHPAPSPGSCSPKFPGAANGSSCGSAAAGGPTSYGTLKEPSGGGGTALLNKENKFRDRSFSENGDRSQHLLHLQQQQKGGGGSQINSTRYKTELCRPFEESGTCKYGEKCQFAHGFHELRSLTRHPKYKTELCRTFHTIGFCPYGPRCHFIHNADERRPAPSGGASGDLRAFGTRDALHLGFPREPRPKLHHSLSFSGFPSGHHQPPGGLESPLLLDSPTSRTPPPPSCSSASSCSSSASSCSSASAASTPSGAPTCCASAAAAAAAALLYGTGGAEDLLAPGAPCAACSSASCANNAFAFGPELSSLITPLAIQTHNFAAVAAAAYYRSQQQQQQQGLAPPAQPPAPPSATLPAGAAAPPSPPFSFQLPRRLSDSPVFDAPPSPPDSLSDRDSYLSGSLSSGSLSGSESPSLDPGRRLPIFSRLSISDD.

At S57 the chain carries Phosphoserine. A disordered region spans residues 93-113 (GGPTSYGTLKEPSGGGGTALL). The residue at position 125 (S125) is a Phosphoserine. The short motif at 153-158 (RYKTEL) is the RNA-binding element. C3H1-type zinc fingers lie at residues 153–181 (RYKT…HGFH) and 191–219 (KYKT…HNAD). The tract at residues 170-211 (YGEKCQFAHGFHELRSLTRHPKYKTELCRTFHTIGFCPYGPR) is RNA-binding. T238 is modified (phosphothreonine). Disordered stretches follow at residues 257–293 (SLSF…PPSC) and 397–494 (QQQQ…ISDD). Over residues 406-415 (PAQPPAPPSA) the composition is skewed to pro residues. Composition is skewed to low complexity over residues 416–435 (TLPA…QLPR) and 459–478 (YLSG…PSLD). Phosphoserine; by RPS6KA1 is present on residues S490 and S492.

As to quaternary structure, associates with the cytoplasmic CCR4-NOT deadenylase to trigger ARE-containing mRNA deadenylation and decay processes. Interacts with CNOT7; this interaction is inhibited in response to phorbol 12-myristate 13-acetate (PMA) treatment in a p38 MAPK-dependent manner. Interacts with CNOT6L. Phosphorylated by RPS6KA1 at Ser-490 and Ser-492 upon phorbol 12-myristate 13-acetate (PMA) treatment; this phosphorylation results in dissociation of the CCR4-NOT-deadenylase complex and induces p38 MAPK-mediated stabilization of the low-density lipoprotein (LDL) receptor (LDLR) mRNA. Phosphorylation occurs during early preadipocyte differentiation. As to expression, expressed mainly in the basal epidermal layer, weakly in the suprabasal epidermal layers. Expressed in epidermal keratinocytes (at protein level). Expressed in oocytes.

Its subcellular location is the nucleus. It is found in the cytoplasm. In terms of biological role, zinc-finger RNA-binding protein that destabilizes several cytoplasmic AU-rich element (ARE)-containing mRNA transcripts by promoting their poly(A) tail removal or deadenylation, and hence provide a mechanism for attenuating protein synthesis. Acts as a 3'-untranslated region (UTR) ARE mRNA-binding adapter protein to communicate signaling events to the mRNA decay machinery. Functions by recruiting the CCR4-NOT deadenylase complex and probably other components of the cytoplasmic RNA decay machinery to the bound ARE-containing mRNAs, and hence promotes ARE-mediated mRNA deadenylation and decay processes. Binds to 3'-UTR ARE of numerous mRNAs. Promotes ARE-containing mRNA decay of the low-density lipoprotein (LDL) receptor (LDLR) mRNA in response to phorbol 12-myristate 13-acetate (PMA) treatment in a p38 MAPK-dependent manner. Positively regulates early adipogenesis by promoting ARE-mediated mRNA decay of immediate early genes (IEGs). Plays a role in mature peripheral neuron integrity by promoting ARE-containing mRNA decay of the transcriptional repressor REST mRNA. Plays a role in ovulation and oocyte meiotic maturation by promoting ARE-mediated mRNA decay of the luteinizing hormone receptor LHCGR mRNA. Acts as a negative regulator of erythroid cell differentiation: promotes glucocorticoid-induced self-renewal of erythroid cells by binding mRNAs that are induced or highly expressed during terminal erythroid differentiation and promotes their degradation, preventing erythroid cell differentiation. In association with ZFP36L1 maintains quiescence on developing B lymphocytes by promoting ARE-mediated decay of several mRNAs encoding cell cycle regulators that help B cells progress through the cell cycle, and hence ensuring accurate variable-diversity-joining (VDJ) recombination process and functional immune cell formation. Together with ZFP36L1 is also necessary for thymocyte development and prevention of T-cell acute lymphoblastic leukemia (T-ALL) transformation by promoting ARE-mediated mRNA decay of the oncogenic transcription factor NOTCH1 mRNA. The protein is mRNA decay activator protein ZFP36L2 of Homo sapiens (Human).